The following is a 196-amino-acid chain: Peptide deformylase (196 aa).

Fe cation-binding residues include Cys-123 and His-166. The active site involves Glu-167. Residue His-170 participates in Fe cation binding.

This sequence belongs to the polypeptide deformylase family. The cofactor is Fe(2+).

It catalyses the reaction N-terminal N-formyl-L-methionyl-[peptide] + H2O = N-terminal L-methionyl-[peptide] + formate. In terms of biological role, removes the formyl group from the N-terminal Met of newly synthesized proteins. Requires at least a dipeptide for an efficient rate of reaction. N-terminal L-methionine is a prerequisite for activity but the enzyme has broad specificity at other positions. The protein is Peptide deformylase of Lactococcus lactis subsp. lactis (strain IL1403) (Streptococcus lactis).